The primary structure comprises 994 residues: Chloride channel protein 1 (994 aa).

The Cytoplasmic portion of the chain corresponds to 1-118 (MERSQSQQHG…VLRRKLGEDW (118 aa)). A disordered region spans residues 37–61 (SENGGLQHRPRKDLGPRHNAHPTQI). Residues 119–150 (IFLVLLGLLMALVSWCMDYVSAKSLQAYKWTY) form a helical membrane-spanning segment. Over 151–158 (AQMQPSLP) the chain is Extracellular. A helical membrane pass occupies residues 159–179 (LQYLAWVTFPLILILFSALFC). Residues 180 to 183 (QLIS) lie on the Cytoplasmic side of the membrane. The note=Loop between two helices intramembrane region spans 184-189 (PQAVGS). Residues 188 to 192 (GSGIP) carry the Selectivity filter part_1 motif. Chloride is bound at residue Ser-189. The segment at residues 190-195 (GIPEMK) is an intramembrane region (helical). The Cytoplasmic portion of the chain corresponds to 196–208 (TILRGVVLKEYLT). The segment at residues 209-224 (LKAFVAKVVALTAGLG) is an intramembrane region (helical). Positions 225–230 (SGIPVG) form an intramembrane region, note=Loop between two helices. The short motif at 230 to 234 (GKEGP) is the Selectivity filter part_2 element. Positions 231–246 (KEGPFVHIASICAAVL) form an intramembrane region, helical. Over 247-268 (SKFMSMFSGVYEQPYYYTDILT) the chain is Cytoplasmic. 2 intramembrane regions (helical) span residues 269–280 (VGCAVGVGCCFG) and 281–290 (TPLGGVLFSI). At 291-301 (EVTSTYFAVRN) the chain is on the cytoplasmic side. The helical transmembrane segment at 302–321 (YWRGFFAATFSAFVFRVLAV) threads the bilayer. The Extracellular portion of the chain corresponds to 322-347 (WNKDAVTITALFRTNFRMDFPFDLKE). A helical membrane pass occupies residues 348-376 (LPAFAVIGICCGFLGAVFVYLHRQVMLGV). At 377 to 390 (RKHKALSQFLAKHR) the chain is on the cytoplasmic side. The chain crosses the membrane as a helical span at residues 391-408 (LLYPGIVTFVIASLTFPP). At 409-414 (GMGQFM) the chain is on the extracellular side. The note=Loop between two helices intramembrane region spans 415–418 (AGEL). The segment at residues 419–426 (MPREAIST) is an intramembrane region (helical). Over 427 to 457 (LFDNNTWVKHIGDPKSLGQSAVWIHPQVNVV) the chain is Extracellular. An intramembrane region (helical) is located at residues 458–475 (IIILLFFVMKFWMSIVAT). Residues 476 to 482 (TMPIPCG) constitute an intramembrane region (note=Loop between two helices). A Selectivity filter part_3 motif is present at residues 482–486 (GGFMP). Positions 483–498 (GFMPVFVLGAAFGRLV) form an intramembrane region, helical. Position 484 (Phe-484) interacts with chloride. The Extracellular portion of the chain corresponds to 499–521 (GEIMAMLFPEGILFDDIIYKILP). An intramembrane region (helical) is located at residues 522–538 (GGYAVIGAAALTGAVSH). An intramembrane region (note=Loop between two helices) is located at residues 539–540 (TV). An intramembrane region (helical) is located at residues 541–554 (STAVICFELTGQIA). Topologically, residues 555–557 (HIL) are extracellular. Positions 558 to 571 (PMMVAVILANMVAQ) form an intramembrane region, helical. Residues 572–575 (SLQP) constitute an intramembrane region (note=Loop between two helices). The segment at residues 576-578 (SLY) is an intramembrane region (helical). Tyr-578 provides a ligand contact to chloride. Over 579–994 (DSIIQVKKLP…DEEDEDELIL (416 aa)) the chain is Cytoplasmic. Residues 609–668 (MVRDVKFVSASCTYGELRNLLQTTTVKTLPLVDSKDSMILLGSVERSELQSLLQRHLCAE) form the CBS 1 domain. Disordered stretches follow at residues 710 to 769 (EDED…SADQ), 880 to 923 (TKSG…DGAP), and 965 to 994 (NLGP…ELIL). Over residues 725–741 (TPTPPPPPPPPLPPQFP) the composition is skewed to pro residues. The region spanning 827 to 882 (IDQSPFQLVEQTTLHKTHTLFSLLGLHLAYVTSMGKLRGVLALEELQKAIKGHTKS) is the CBS 2 domain. Ser-892 carries the phosphoserine modification. Residues 985–994 (DEEDEDELIL) are compositionally biased toward acidic residues.

Belongs to the chloride channel (TC 2.A.49) family. ClC-1/CLCN1 subfamily. As to quaternary structure, homodimer. As to expression, predominantly expressed in skeletal muscles.

It localises to the cell membrane. The protein localises to the sarcolemma. It is found in the T-tubule. It carries out the reaction chloride(in) = chloride(out). The enzyme catalyses bromide(in) = bromide(out). The catalysed reaction is iodide(out) = iodide(in). It catalyses the reaction thiocyanate(in) = thiocyanate(out). It carries out the reaction nitrate(in) = nitrate(out). Its activity is regulated as follows. Modulated by membrane voltage with depolarization favouring channel opening and hyperpolarization favouring channel closure. Inhibited by acidic pH and ATP binding due to a shift of voltage dependence of common gating to more positive voltages. Inhibited by 9-anthracene-carboxylic acid. Voltage-gated chloride channel involved in skeletal muscle excitability. Generates most of the plasma membrane chloride conductance in skeletal muscle fibers, stabilizes the resting membrane potential and contributes to the repolarization phase during action potential firing. Forms a homodimeric channel where each subunit has its own ion conduction pathway. Conducts double-barreled currents controlled by two types of gates, two fast glutamate gates that control each subunit independently and a slow common gate that opens and shuts off both subunits simultaneously. Has a significant open probability at muscle resting potential and is further activated upon membrane depolarization. Permeable to small monovalent anions with ion selectivity for chloride &gt; thiocyanate &gt; bromide &gt; nitrate &gt; iodide. The sequence is that of Chloride channel protein 1 (Clcn1) from Rattus norvegicus (Rat).